A 178-amino-acid chain; its full sequence is Nucleoplasmin-3 (178 aa).

The residue at position 2 (Ala2) is an N-acetylalanine. Ser13 and Ser16 each carry phosphoserine. Omega-N-methylarginine is present on Arg27. Positions 141 to 178 (TMSNDVSEEESEEEEEDSDEEEVELCPILPAKKQGGRP) are disordered. Acidic residues predominate over residues 146 to 164 (VSEEESEEEEEDSDEEEVE). Ser147, Ser151, and Ser158 each carry phosphoserine.

The protein belongs to the nucleoplasmin family. Interacts with NPM (via N-terminus). Forms a pentamer with NPM at a ratio 4:1 (NPM3/NPM). Two pentamers form a decamer. In terms of processing, phosphorylated. In terms of tissue distribution, ubiquitous.

It localises to the nucleus. The protein localises to the nucleolus. Plays a role in the regulation of diverse cellular processes such as ribosome biogenesis, chromatin remodeling or protein chaperoning. Modulates the histone chaperone function and the RNA-binding activity of nucleolar phosphoprotein B23/NPM. Efficiently mediates chromatin remodeling when included in a pentamer containing NPM3 and NPM. In Homo sapiens (Human), this protein is Nucleoplasmin-3 (NPM3).